Reading from the N-terminus, the 456-residue chain is Bifunctional protein GlmU (456 aa).

Residues 1 to 229 (MLNSAMSVVI…LSEVEGVNNR (229 aa)) form a pyrophosphorylase region. Residues 11–14 (LAAG), Lys-25, Gln-76, 81–82 (GT), 103–105 (YGD), Gly-140, Glu-154, Asn-169, and Asn-227 each bind UDP-N-acetyl-alpha-D-glucosamine. Asp-105 contacts Mg(2+). Mg(2+) is bound at residue Asn-227. Residues 230–250 (LQLSALERIYQREQADKLLLA) form a linker region. Residues 251-456 (GVMLLDPARF…SGWQRPVKKK (206 aa)) form an N-acetyltransferase region. UDP-N-acetyl-alpha-D-glucosamine contacts are provided by Arg-333 and Lys-351. The active-site Proton acceptor is the His-363. Tyr-366 and Asn-377 together coordinate UDP-N-acetyl-alpha-D-glucosamine. Acetyl-CoA is bound by residues Ala-380, 386–387 (NY), Ser-405, Ala-423, and Arg-440.

The protein in the N-terminal section; belongs to the N-acetylglucosamine-1-phosphate uridyltransferase family. In the C-terminal section; belongs to the transferase hexapeptide repeat family. Homotrimer. The cofactor is Mg(2+).

The protein localises to the cytoplasm. The catalysed reaction is alpha-D-glucosamine 1-phosphate + acetyl-CoA = N-acetyl-alpha-D-glucosamine 1-phosphate + CoA + H(+). It catalyses the reaction N-acetyl-alpha-D-glucosamine 1-phosphate + UTP + H(+) = UDP-N-acetyl-alpha-D-glucosamine + diphosphate. It functions in the pathway nucleotide-sugar biosynthesis; UDP-N-acetyl-alpha-D-glucosamine biosynthesis; N-acetyl-alpha-D-glucosamine 1-phosphate from alpha-D-glucosamine 6-phosphate (route II): step 2/2. It participates in nucleotide-sugar biosynthesis; UDP-N-acetyl-alpha-D-glucosamine biosynthesis; UDP-N-acetyl-alpha-D-glucosamine from N-acetyl-alpha-D-glucosamine 1-phosphate: step 1/1. Its pathway is bacterial outer membrane biogenesis; LPS lipid A biosynthesis. In terms of biological role, catalyzes the last two sequential reactions in the de novo biosynthetic pathway for UDP-N-acetylglucosamine (UDP-GlcNAc). The C-terminal domain catalyzes the transfer of acetyl group from acetyl coenzyme A to glucosamine-1-phosphate (GlcN-1-P) to produce N-acetylglucosamine-1-phosphate (GlcNAc-1-P), which is converted into UDP-GlcNAc by the transfer of uridine 5-monophosphate (from uridine 5-triphosphate), a reaction catalyzed by the N-terminal domain. The polypeptide is Bifunctional protein GlmU (Pectobacterium atrosepticum (strain SCRI 1043 / ATCC BAA-672) (Erwinia carotovora subsp. atroseptica)).